The primary structure comprises 310 residues: MKIIFMGTPTFAVPSLEKIYKEHEIISVFTKVDKPNARGKKINYSPIKEFALANNLKIYQPENFKDNTLIEEIRNMQADLIVVVAYGKILPKEVIDIPKYGVINLHSSLLPRFRGAAPINAAIINGDTKSGISIMYVEEELDAGDVILQEETEISDEDTFLSLHDRLKDMGADLLLKAIELIKKGEVKAQKQDKKLVTFVKPFRKEDCKIDWTKTSREIFNFIRGMNPIPTAFSNLNGTIIKIYETKINDKVYNNATCGEVVEYLKGKGIVVKTSDGSLIISSAKPENKKQMSGVDLINGKFLKIGEKLC.

Residue 108–111 (SLLP) coordinates (6S)-5,6,7,8-tetrahydrofolate.

It belongs to the Fmt family.

It carries out the reaction L-methionyl-tRNA(fMet) + (6R)-10-formyltetrahydrofolate = N-formyl-L-methionyl-tRNA(fMet) + (6S)-5,6,7,8-tetrahydrofolate + H(+). Functionally, attaches a formyl group to the free amino group of methionyl-tRNA(fMet). The formyl group appears to play a dual role in the initiator identity of N-formylmethionyl-tRNA by promoting its recognition by IF2 and preventing the misappropriation of this tRNA by the elongation apparatus. This chain is Methionyl-tRNA formyltransferase, found in Fusobacterium nucleatum subsp. nucleatum (strain ATCC 25586 / DSM 15643 / BCRC 10681 / CIP 101130 / JCM 8532 / KCTC 2640 / LMG 13131 / VPI 4355).